The sequence spans 278 residues: Delta(3,5)-Delta(2,4)-dienoyl-CoA isomerase, peroxisomal (278 aa).

Methionine 1 carries the post-translational modification N-acetylmethionine. Substrate contacts are provided by residues 69 to 73 (SGIDL) and glycine 128. Positions 276-278 (AKL) match the Microbody targeting signal motif.

Belongs to the enoyl-CoA hydratase/isomerase family. Expressed in roots, leaves, stems and flowers.

It localises to the peroxisome. The enzyme catalyses a (3E,5Z)-dienoyl-CoA = a (2E,4E)-(5,6-saturated)-dienoyl-CoA. It participates in lipid metabolism; fatty acid beta-oxidation. In terms of biological role, converts 3,5-dienoyl-CoAs to the corresponding 2,4-dienoyl-CoAs. Involved in degradation of unsaturated fatty acids. The protein is Delta(3,5)-Delta(2,4)-dienoyl-CoA isomerase, peroxisomal of Arabidopsis thaliana (Mouse-ear cress).